A 618-amino-acid chain; its full sequence is Rho guanine nucleotide exchange factor 25 (618 aa).

2 disordered regions span residues 26 to 63 (CAVPGQEGPPERDPLGPGSTKTESDCIEEDQTGQREPE) and 169 to 193 (GPGDKAQPAEEETLSQAPKNEEEQK). One can recognise a DH domain in the interval 199-375 (RSMFVLGELV…CFVPKRCNDM (177 aa)). The tract at residues 317–338 (LGHRLQLNDLLIKPVQRIMKYQ) is important for binding to Rho GTPases. The PH domain occupies 387-505 (KLTAQGKLLG…WIKQVAQILE (119 aa)). The segment at 506–532 (SQRDFLNALQSPIEYQRRESQTNSLGR) is sufficient to bind activated GNAQ. Disordered stretches follow at residues 521–556 (QRRESQTNSLGRPGGPWVGSPGRMRPGDLAQASMHT) and 584–604 (ALSDTPQTPHDSPALPTVNTP). Positions 584–593 (ALSDTPQTPH) are enriched in polar residues.

As to quaternary structure, interacts with activated GNAQ and GNA11. Interacts (via the DH domain) with POPDC1 (via the C-terminus cytoplasmic tail). Interacts with RHOA, CDC42 and RAC1. In terms of tissue distribution, highly expressed in excitable tissues, such as brain, heart and muscle. Elevated expression in hippocampus and cerebellum.

It is found in the cytoplasm. The protein resides in the myofibril. Its subcellular location is the sarcomere. It localises to the cell membrane. May play a role in actin cytoskeleton reorganization in different tissues since its activation induces formation of actin stress fibers. It works as a guanine nucleotide exchange factor for Rho family of small GTPases. Links specifically G alpha q/11-coupled receptors to RHOA activation. May be an important regulator of processes involved in axon and dendrite formation. In neurons seems to be an exchange factor primarily for RAC1. Involved in skeletal myogenesis. The polypeptide is Rho guanine nucleotide exchange factor 25 (Arhgef25) (Mus musculus (Mouse)).